We begin with the raw amino-acid sequence, 508 residues long: Bifunctional purine biosynthesis protein PurH (508 aa).

The MGS-like domain maps to 1–145 (MIKRALLSTY…KNYKDVIVVV (145 aa)).

The protein belongs to the PurH family.

The enzyme catalyses (6R)-10-formyltetrahydrofolate + 5-amino-1-(5-phospho-beta-D-ribosyl)imidazole-4-carboxamide = 5-formamido-1-(5-phospho-D-ribosyl)imidazole-4-carboxamide + (6S)-5,6,7,8-tetrahydrofolate. The catalysed reaction is IMP + H2O = 5-formamido-1-(5-phospho-D-ribosyl)imidazole-4-carboxamide. It functions in the pathway purine metabolism; IMP biosynthesis via de novo pathway; 5-formamido-1-(5-phospho-D-ribosyl)imidazole-4-carboxamide from 5-amino-1-(5-phospho-D-ribosyl)imidazole-4-carboxamide (10-formyl THF route): step 1/1. The protein operates within purine metabolism; IMP biosynthesis via de novo pathway; IMP from 5-formamido-1-(5-phospho-D-ribosyl)imidazole-4-carboxamide: step 1/1. The sequence is that of Bifunctional purine biosynthesis protein PurH from Petrotoga mobilis (strain DSM 10674 / SJ95).